Consider the following 191-residue polypeptide: UPF0312 protein Shewmr7_1249 (191 aa).

The first 22 residues, 1–22, serve as a signal peptide directing secretion; it reads MKKQLLAALIGGFLLAPMAASA.

It belongs to the UPF0312 family. Type 1 subfamily.

It is found in the periplasm. The sequence is that of UPF0312 protein Shewmr7_1249 from Shewanella sp. (strain MR-7).